Here is a 659-residue protein sequence, read N- to C-terminus: Pollen receptor-like kinase 6 (659 aa).

Positions methionine 1–glutamine 26 are cleaved as a signal peptide. Over tyrosine 27 to alanine 266 the chain is Extracellular. A disulfide bond links cysteine 58 and cysteine 67. 5 LRR repeats span residues leucine 95–leucine 118, glycine 120–aspartate 142, methionine 143–leucine 167, proline 168–serine 190, and lysine 192–aspartate 214. An N-linked (GlcNAc...) asparagine glycan is attached at asparagine 128. N-linked (GlcNAc...) asparagine glycosylation is present at asparagine 179. A glycan (N-linked (GlcNAc...) asparagine) is linked at asparagine 221. Positions glutamate 226–leucine 242 are LURE peptides binding. A disulfide bridge connects residues cysteine 229 and cysteine 237. The disordered stretch occupies residues glutamate 241–glutamate 260. The chain crosses the membrane as a helical span at residues isoleucine 267–isoleucine 287. The Cytoplasmic segment spans residues lysine 288–threonine 659. The segment at valine 312–glycine 354 is disordered. Over residues arginine 324–threonine 341 the composition is skewed to basic and acidic residues. A Protein kinase domain is found at lysine 384–threonine 659. Residues leucine 390–alanine 398 and lysine 412 contribute to the ATP site. Serine 464 is subject to Phosphoserine. Phosphothreonine occurs at positions 484 and 557. Serine 561 is modified (phosphoserine).

This sequence belongs to the protein kinase superfamily. Ser/Thr protein kinase family. As to quaternary structure, interacts with ROPGEF8, ROPGEF9, ROPGEF12, ROPGEF13, PRK3, LIP1 and LIP2. Binds to LURE peptides via its LRR repeats; interacts with LURE1.1, LURE1.2, LURE1.3 and LURE1.4. As to expression, expressed specifically in the pollen tube, predominantly at the tip.

It localises to the cell membrane. The protein localises to the cytoplasmic granule. Functionally, key receptor for sensing species-specific attractants in cooperation with other pollen receptor-like kinases. Essential for pollen tube reorientation toward attractant peptides. The chain is Pollen receptor-like kinase 6 from Arabidopsis thaliana (Mouse-ear cress).